Reading from the N-terminus, the 217-residue chain is N-(5'-phosphoribosyl)anthranilate isomerase (217 aa).

The protein belongs to the TrpF family.

The catalysed reaction is N-(5-phospho-beta-D-ribosyl)anthranilate = 1-(2-carboxyphenylamino)-1-deoxy-D-ribulose 5-phosphate. The protein operates within amino-acid biosynthesis; L-tryptophan biosynthesis; L-tryptophan from chorismate: step 3/5. This Acaryochloris marina (strain MBIC 11017) protein is N-(5'-phosphoribosyl)anthranilate isomerase.